The chain runs to 959 residues: Isoleucine--tRNA ligase (959 aa).

The 'HIGH' region signature appears at 60–70 (PYANGSLHIGH). An L-isoleucyl-5'-AMP-binding site is contributed by Glu571. The short motif at 612–616 (KMSKS) is the 'KMSKS' region element. Lys615 contacts ATP. Zn(2+)-binding residues include Cys928, Cys931, Cys948, and Cys951.

This sequence belongs to the class-I aminoacyl-tRNA synthetase family. IleS type 1 subfamily. As to quaternary structure, monomer. Requires Zn(2+) as cofactor.

The protein localises to the cytoplasm. The enzyme catalyses tRNA(Ile) + L-isoleucine + ATP = L-isoleucyl-tRNA(Ile) + AMP + diphosphate. Functionally, catalyzes the attachment of isoleucine to tRNA(Ile). As IleRS can inadvertently accommodate and process structurally similar amino acids such as valine, to avoid such errors it has two additional distinct tRNA(Ile)-dependent editing activities. One activity is designated as 'pretransfer' editing and involves the hydrolysis of activated Val-AMP. The other activity is designated 'posttransfer' editing and involves deacylation of mischarged Val-tRNA(Ile). The chain is Isoleucine--tRNA ligase from Nostoc punctiforme (strain ATCC 29133 / PCC 73102).